The chain runs to 1516 residues: Alpha-2-macroglobulin homolog (1516 aa).

The N-terminal stretch at 1 to 26 (MSNLRRFSRSLAVAALVLLPFAAVQA) is a signal peptide.

The protein belongs to the protease inhibitor I39 (alpha-2-macroglobulin) family. Bacterial alpha-2-macroglobulin subfamily.

The chain is Alpha-2-macroglobulin homolog from Pseudomonas aeruginosa (strain ATCC 15692 / DSM 22644 / CIP 104116 / JCM 14847 / LMG 12228 / 1C / PRS 101 / PAO1).